The chain runs to 243 residues: Probable 2-phosphosulfolactate phosphatase (243 aa).

This sequence belongs to the ComB family. Requires Mg(2+) as cofactor.

It carries out the reaction (2R)-O-phospho-3-sulfolactate + H2O = (2R)-3-sulfolactate + phosphate. The sequence is that of Probable 2-phosphosulfolactate phosphatase from Prochlorococcus marinus (strain MIT 9313).